We begin with the raw amino-acid sequence, 220 residues long: MKVAGVDEAGRGPVIGPLVIGVAVIDEKNIERLRDIGVKDSKQLTPGQREKLFSKLIDILDDYYVLLVTPKEIDERHHSMNELEAEKFVVALNSLRIKPQKIYVDSADVDPKRFASLIKAGLKYEATVIAEHKADAKYEIVSAASIIAKVTRDREIEKLKQKYGEFGSGYPSDPRTKEWLEEYYKQYGDFPPIVRRTWETARKIEERFRKNQLTLDKFLK.

One can recognise an RNase H type-2 domain in the interval 1–210 (MKVAGVDEAG…ARKIEERFRK (210 aa)). 3 residues coordinate a divalent metal cation: Asp7, Glu8, and Asp105.

Belongs to the RNase HII family. Mn(2+) is required as a cofactor. Requires Mg(2+) as cofactor.

It localises to the cytoplasm. It carries out the reaction Endonucleolytic cleavage to 5'-phosphomonoester.. Its function is as follows. Endonuclease that specifically degrades the RNA of RNA-DNA hybrids. The sequence is that of Ribonuclease HII (rnhB) from Pyrococcus horikoshii (strain ATCC 700860 / DSM 12428 / JCM 9974 / NBRC 100139 / OT-3).